The chain runs to 90 residues: Barstar (90 aa).

This sequence belongs to the barstar family.

The protein localises to the cytoplasm. In terms of biological role, inhibitor of the ribonuclease barnase. Forms a one-to-one non-covalent complex. The chain is Barstar from Bacillus amyloliquefaciens (Bacillus velezensis).